A 491-amino-acid polypeptide reads, in one-letter code: uncharacterized protein (491 aa).

Position 267–274 (267–274 (GIQGTGKS)) interacts with ATP.

Belongs to the AAA ATPase family. Highly divergent.

It localises to the plastid. The protein resides in the chloroplast. This is an uncharacterized protein from Gracilaria tenuistipitata var. liui (Red alga).